Consider the following 412-residue polypeptide: Alanyl-tRNA editing protein Aarsd1 (412 aa).

2 residues coordinate Zn(2+): histidine 109 and histidine 113. Serine 174 bears the Phosphoserine mark. Residues cysteine 209 and histidine 213 each contribute to the Zn(2+) site.

The protein belongs to the class-II aminoacyl-tRNA synthetase family. Alax-L subfamily. Zn(2+) serves as cofactor.

It localises to the cytoplasm. Functions in trans to edit the amino acid moiety from incorrectly charged tRNA(Ala). This chain is Alanyl-tRNA editing protein Aarsd1 (AARSD1), found in Homo sapiens (Human).